The sequence spans 321 residues: N-acetyl-gamma-glutamyl-phosphate reductase (321 aa).

The active site involves C131.

This sequence belongs to the NAGSA dehydrogenase family. Type 1 subfamily.

It localises to the cytoplasm. It carries out the reaction N-acetyl-L-glutamate 5-semialdehyde + phosphate + NADP(+) = N-acetyl-L-glutamyl 5-phosphate + NADPH + H(+). The protein operates within amino-acid biosynthesis; L-arginine biosynthesis; N(2)-acetyl-L-ornithine from L-glutamate: step 3/4. Catalyzes the NADPH-dependent reduction of N-acetyl-5-glutamyl phosphate to yield N-acetyl-L-glutamate 5-semialdehyde. This is N-acetyl-gamma-glutamyl-phosphate reductase from Christiangramia forsetii (strain DSM 17595 / CGMCC 1.15422 / KT0803) (Gramella forsetii).